An 855-amino-acid polypeptide reads, in one-letter code: DNA mismatch repair protein MutS (855 aa).

Residue 613-620 (GPNMGGKS) coordinates ATP. The disordered stretch occupies residues 796–816 (TTSLPHEMPSQQSGKPASPMQ).

Belongs to the DNA mismatch repair MutS family.

Functionally, this protein is involved in the repair of mismatches in DNA. It is possible that it carries out the mismatch recognition step. This protein has a weak ATPase activity. This is DNA mismatch repair protein MutS from Pseudomonas aeruginosa (strain ATCC 15692 / DSM 22644 / CIP 104116 / JCM 14847 / LMG 12228 / 1C / PRS 101 / PAO1).